The chain runs to 192 residues: Peptidyl-tRNA hydrolase (192 aa).

Residue Tyr14 coordinates tRNA. The active-site Proton acceptor is the His19. TRNA contacts are provided by Tyr61, Asn63, and Asn107.

Belongs to the PTH family. In terms of assembly, monomer.

It is found in the cytoplasm. The catalysed reaction is an N-acyl-L-alpha-aminoacyl-tRNA + H2O = an N-acyl-L-amino acid + a tRNA + H(+). Hydrolyzes ribosome-free peptidyl-tRNAs (with 1 or more amino acids incorporated), which drop off the ribosome during protein synthesis, or as a result of ribosome stalling. In terms of biological role, catalyzes the release of premature peptidyl moieties from peptidyl-tRNA molecules trapped in stalled 50S ribosomal subunits, and thus maintains levels of free tRNAs and 50S ribosomes. This Wolinella succinogenes (strain ATCC 29543 / DSM 1740 / CCUG 13145 / JCM 31913 / LMG 7466 / NCTC 11488 / FDC 602W) (Vibrio succinogenes) protein is Peptidyl-tRNA hydrolase.